The chain runs to 104 residues: Large ribosomal subunit protein bL21 (104 aa).

The protein belongs to the bacterial ribosomal protein bL21 family. In terms of assembly, part of the 50S ribosomal subunit. Contacts protein L20.

Its function is as follows. This protein binds to 23S rRNA in the presence of protein L20. The sequence is that of Large ribosomal subunit protein bL21 from Granulibacter bethesdensis (strain ATCC BAA-1260 / CGDNIH1).